A 124-amino-acid chain; its full sequence is UPF0102 protein HEAR0176 (124 aa).

The protein belongs to the UPF0102 family.

This is UPF0102 protein HEAR0176 from Herminiimonas arsenicoxydans.